The following is a 484-amino-acid chain: UDP-N-acetylmuramate--L-alanine ligase (484 aa).

Position 126–132 (126–132) interacts with ATP; it reads GTHGKTT.

Belongs to the MurCDEF family.

The protein resides in the cytoplasm. The enzyme catalyses UDP-N-acetyl-alpha-D-muramate + L-alanine + ATP = UDP-N-acetyl-alpha-D-muramoyl-L-alanine + ADP + phosphate + H(+). The protein operates within cell wall biogenesis; peptidoglycan biosynthesis. In terms of biological role, cell wall formation. In Aeromonas hydrophila subsp. hydrophila (strain ATCC 7966 / DSM 30187 / BCRC 13018 / CCUG 14551 / JCM 1027 / KCTC 2358 / NCIMB 9240 / NCTC 8049), this protein is UDP-N-acetylmuramate--L-alanine ligase.